Consider the following 458-residue polypeptide: ATP synthase subunit beta (458 aa).

Residue Gly148 to Thr155 coordinates ATP.

This sequence belongs to the ATPase alpha/beta chains family. F-type ATPases have 2 components, CF(1) - the catalytic core - and CF(0) - the membrane proton channel. CF(1) has five subunits: alpha(3), beta(3), gamma(1), delta(1), epsilon(1). CF(0) has three main subunits: a(1), b(2) and c(9-12). The alpha and beta chains form an alternating ring which encloses part of the gamma chain. CF(1) is attached to CF(0) by a central stalk formed by the gamma and epsilon chains, while a peripheral stalk is formed by the delta and b chains.

It localises to the cell inner membrane. It catalyses the reaction ATP + H2O + 4 H(+)(in) = ADP + phosphate + 5 H(+)(out). Functionally, produces ATP from ADP in the presence of a proton gradient across the membrane. The catalytic sites are hosted primarily by the beta subunits. This Francisella tularensis subsp. novicida (strain U112) protein is ATP synthase subunit beta.